The sequence spans 307 residues: Ribonuclease Z (307 aa).

Zn(2+)-binding residues include histidine 63, histidine 65, aspartate 67, histidine 68, histidine 141, aspartate 208, and histidine 266. Residue aspartate 67 is the Proton acceptor of the active site.

It belongs to the RNase Z family. Homodimer. It depends on Zn(2+) as a cofactor.

It carries out the reaction Endonucleolytic cleavage of RNA, removing extra 3' nucleotides from tRNA precursor, generating 3' termini of tRNAs. A 3'-hydroxy group is left at the tRNA terminus and a 5'-phosphoryl group is left at the trailer molecule.. In terms of biological role, zinc phosphodiesterase, which displays some tRNA 3'-processing endonuclease activity. Probably involved in tRNA maturation, by removing a 3'-trailer from precursor tRNA. This is Ribonuclease Z from Chlamydia pneumoniae (Chlamydophila pneumoniae).